The chain runs to 364 residues: DNA replication and repair protein RecF (364 aa).

Gly30–Thr37 contributes to the ATP binding site.

Belongs to the RecF family.

It localises to the cytoplasm. The RecF protein is involved in DNA metabolism; it is required for DNA replication and normal SOS inducibility. RecF binds preferentially to single-stranded, linear DNA. It also seems to bind ATP. This is DNA replication and repair protein RecF from Streptococcus uberis (strain ATCC BAA-854 / 0140J).